The chain runs to 381 residues: Guanine nucleotide-binding protein subunit alpha-12 (381 aa).

Cys11 is lipidated: S-palmitoyl cysteine. The G-alpha domain maps to 56-381; that stretch reads RLVKILLLGA…QENLKDIMLQ (326 aa). Residues 59-72 are G1 motif; the sequence is KILLLGAGESGKST. Residues 67-72 and 202-205 each bind GTP; these read ESGKST and LLAR. Ser71 provides a ligand contact to Mg(2+). A G2 motif region spans residues 200–208; that stretch reads DILLARKAT. Mg(2+) is bound at residue Thr208. Thr208 carries the phosphothreonine modification. Residues 223–232 are G3 motif; the sequence is FKMVDVGGQR. A G4 motif region spans residues 292–299; sequence ILFLNKMD. GTP-binding positions include 296–299 and Ala353; that span reads NKMD. Residues 351-356 form a G5 motif region; sequence TTAIDT.

It belongs to the G-alpha family. G(12) subfamily. As to quaternary structure, g proteins are composed of 3 units; alpha, beta and gamma. The alpha chain contains the guanine nucleotide binding site. Interacts with UBXD5. Interacts (in GTP-bound form) with PPP5C (via TPR repeats); activates PPP5C phosphatase activity and translocates PPP5C to the cell membrane. Interacts with RGS22. Interacts (via N-terminus) with NAPA; the interaction promotes CDH5 localization to plasma membrane. Interacts with CTNND1 (via N-terminus); the interaction regulates CDH1-mediated cell-cell adhesion. Interacts with PPP2R1A; the interaction promotes protein phosphatase 2A activation causing dephosphorylation of MAPT. Interacts (in GTP-bound form) with ARHGEF1. Interacts (in GTP-bound form) with ARHGEF11 (via RGS domain). Interacts (in GTP-bound form) with ARHGEF12 (via RGS domain).

The protein resides in the cell membrane. Its subcellular location is the lateral cell membrane. It localises to the cytoplasm. Guanine nucleotide-binding proteins (G proteins) are involved as modulators or transducers in various transmembrane signaling systems. Activates effector molecule RhoA by binding and activating RhoGEFs (ARHGEF12/LARG). GNA12-dependent Rho signaling subsequently regulates transcription factor AP-1 (activating protein-1). GNA12-dependent Rho signaling also regulates protein phosphatese 2A activation causing dephosphorylation of its target proteins. Promotes tumor cell invasion and metastasis by activating RhoA/ROCK signaling pathway and up-regulating pro-inflammatory cytokine production. Inhibits CDH1-mediated cell adhesion in process independent from Rho activation. Together with NAPA promotes CDH5 localization to plasma membrane. May play a role in the control of cell migration through the TOR signaling cascade. This chain is Guanine nucleotide-binding protein subunit alpha-12 (GNA12), found in Homo sapiens (Human).